A 494-amino-acid polypeptide reads, in one-letter code: MSTGTFVVSQPLNYRGGARVEPADASGTEKAFEPATGRVIATFTCSGEKEVNLAVQNAKAAFKIWSQKSGMERCRILLEAARIIREREGEIATMECINNGKSIFEARLDINISWQCLEYYAGLAASMAGEHIQLPGGSFGYTRREPLGVCVGIGAWNYPFQITSWKSAPALACGNAMVFKPSPFTPVSALLLAEIYTEAGVPPGLFNVVQGGAATGQFLCQHPDVAKVSFTGSVPTGMKIMEMSAKGIKPVTLELGGKSPLIIFSDCDMNNAVKGALMANFLTQGQVCCNGTRVFVQKEILDKFTEEVVKQTQRIKIGDPLLEDTRMGPLINRPHLERVLGFVKVAKEQGAKVLCGGDIYVPEDPKLKDGYYMRPCVLTNCRDDMTCVKEEIFGPVMSILSFDTEAEVLERANDTTFGLAAGVFTRDIQRAHRVVAELQAGTCFINNYNVSPVELPFGGYKKSGFGRENGRVTIEYYSQLKTVCVEMGDVESAF.

An N-acetylserine modification is found at S2. K30 is subject to N6-acetyllysine; alternate. Position 30 is an N6-succinyllysine; alternate (K30). K59 bears the N6-succinyllysine mark. NAD(+) is bound by residues K180 and 232–236 (GSVPT). Residue E254 is the Proton acceptor of the active site. The active-site Nucleophile is C288. K298 carries the N6-acetyllysine modification. N6-acetyllysine; alternate is present on K303. An N6-succinyllysine; alternate modification is found at K303. An N6-acetyllysine modification is found at K344. Residue E391 participates in NAD(+) binding.

The protein belongs to the aldehyde dehydrogenase family. As to quaternary structure, homotetramer.

It localises to the cytoplasm. The protein localises to the cytosol. It carries out the reaction 4-(trimethylamino)butanal + NAD(+) + H2O = 4-(trimethylamino)butanoate + NADH + 2 H(+). The catalysed reaction is an aldehyde + NAD(+) + H2O = a carboxylate + NADH + 2 H(+). It catalyses the reaction 4-aminobutanal + NAD(+) + H2O = 4-aminobutanoate + NADH + 2 H(+). The enzyme catalyses formaldehyde + NAD(+) + H2O = formate + NADH + 2 H(+). It carries out the reaction acetaldehyde + NAD(+) + H2O = acetate + NADH + 2 H(+). The catalysed reaction is imidazole-4-acetaldehyde + NAD(+) + H2O = imidazole-4-acetate + NADH + 2 H(+). It catalyses the reaction acrolein + NAD(+) + H2O = acrylate + NADH + 2 H(+). The enzyme catalyses (5-hydroxyindol-3-yl)acetaldehyde + NAD(+) + H2O = (5-hydroxyindol-3-yl)acetate + NADH + 2 H(+). It carries out the reaction 3,4-dihydroxyphenylacetaldehyde + NAD(+) + H2O = 3,4-dihydroxyphenylacetate + NADH + 2 H(+). The catalysed reaction is spermine monoaldehyde + NAD(+) + H2O = N-(2-carboxyethyl)spermidine + NADH + 2 H(+). It catalyses the reaction propanal + NAD(+) + H2O = propanoate + NADH + 2 H(+). The enzyme catalyses butanal + NAD(+) + H2O = butanoate + NADH + 2 H(+). It carries out the reaction pentanal + NAD(+) + H2O = pentanoate + NADH + 2 H(+). The catalysed reaction is hexanal + NAD(+) + H2O = hexanoate + NADH + 2 H(+). It functions in the pathway amine and polyamine biosynthesis; carnitine biosynthesis. Its function is as follows. Converts gamma-trimethylaminobutyraldehyde into gamma-butyrobetaine with high efficiency (in vitro). Can catalyze the irreversible oxidation of a broad range of aldehydes to the corresponding acids in an NAD-dependent reaction, but with low efficiency. Catalyzes the oxidation of aldehydes arising from biogenic amines and polyamines. The protein is 4-trimethylaminobutyraldehyde dehydrogenase (ALDH9A1) of Pongo abelii (Sumatran orangutan).